A 154-amino-acid polypeptide reads, in one-letter code: 6,7-dimethyl-8-ribityllumazine synthase (154 aa).

Residues phenylalanine 22, 56-58 (AFE), and 80-82 (AVI) contribute to the 5-amino-6-(D-ribitylamino)uracil site. 85–86 (ST) lines the (2S)-2-hydroxy-3-oxobutyl phosphate pocket. Histidine 88 (proton donor) is an active-site residue. Phenylalanine 113 serves as a coordination point for 5-amino-6-(D-ribitylamino)uracil. Arginine 127 is a binding site for (2S)-2-hydroxy-3-oxobutyl phosphate.

It belongs to the DMRL synthase family.

It catalyses the reaction (2S)-2-hydroxy-3-oxobutyl phosphate + 5-amino-6-(D-ribitylamino)uracil = 6,7-dimethyl-8-(1-D-ribityl)lumazine + phosphate + 2 H2O + H(+). It functions in the pathway cofactor biosynthesis; riboflavin biosynthesis; riboflavin from 2-hydroxy-3-oxobutyl phosphate and 5-amino-6-(D-ribitylamino)uracil: step 1/2. In terms of biological role, catalyzes the formation of 6,7-dimethyl-8-ribityllumazine by condensation of 5-amino-6-(D-ribitylamino)uracil with 3,4-dihydroxy-2-butanone 4-phosphate. This is the penultimate step in the biosynthesis of riboflavin. In Clostridium beijerinckii (strain ATCC 51743 / NCIMB 8052) (Clostridium acetobutylicum), this protein is 6,7-dimethyl-8-ribityllumazine synthase.